Reading from the N-terminus, the 708-residue chain is Lactotransferrin (708 aa).

The N-terminal stretch at M1–A19 is a signal peptide. 2 Transferrin-like domains span residues V25–E352 and V364–K693. Disulfide bonds link C28-C64 and C38-C55. Residue D79 coordinates Fe(3+). K92 is a catalytic residue. Y111 contacts Fe(3+). 5 disulfides stabilise this stretch: C134–C217, C176–C192, C179–C202, C189–C200, and C250–C264. Residues R140, A142, and G143 each contribute to the hydrogencarbonate site. Y211 serves as a coordination point for Fe(3+). An N-linked (GlcNAc...) (high mannose) asparagine glycan is attached at N252. H272 is a Fe(3+) binding site. S278 functions as the Nucleophile in the catalytic mechanism. A glycan (N-linked (GlcNAc...) asparagine) is linked at N300. 2 cysteine pairs are disulfide-bonded: C367–C399 and C377–C390. N387 is a glycosylation site (N-linked (GlcNAc...) (complex) asparagine; alternate). The N-linked (GlcNAc...) (high mannose) asparagine; alternate glycan is linked to N387. N387 carries an N-linked (GlcNAc...) (hybrid) asparagine; alternate glycan. Residues D414 and Y452 each contribute to the Fe(3+) site. 8 disulfides stabilise this stretch: C424/C703, C444/C666, C476/C551, C500/C694, C510/C524, C521/C534, C592/C606, and C644/C649. Hydrogencarbonate contacts are provided by T478, R482, A484, and G485. Residue N495 is glycosylated (N-linked (GlcNAc...) (complex) asparagine; alternate). Residue N495 is glycosylated (N-linked (GlcNAc...) (high mannose) asparagine; alternate). N495 carries N-linked (GlcNAc...) (hybrid) asparagine; alternate glycosylation. Position 545 (Y545) interacts with Fe(3+). The N-linked (GlcNAc...) (high mannose) asparagine glycan is linked to N564. H614 lines the Fe(3+) pocket.

The protein belongs to the transferrin family. Monomer. Found in a complex with LTF, CLU, EPPIN and SEMG1. Found in a complex with MPO and LTF; interacts directly with CP, allows Fe(3+) incorporation into LTF and activation of CP ferroxidase activity. Post-translationally, poly-N-acetyllactosaminic carbohydrate moiety seems to be needed for TLR4 activation.

The protein resides in the secreted. Its subcellular location is the cytoplasmic granule. Functionally, transferrins are iron binding transport proteins which can bind two Fe(3+) ions in association with the binding of an anion, usually bicarbonate. Major iron-binding and multifunctional protein found in exocrine fluids such as breast milk and mucosal secretions. Has antimicrobial activity, which depends on the extracellular cation concentration. Antimicrobial properties include bacteriostasis, which is related to its ability to sequester free iron and thus inhibit microbial growth, as well as direct bactericidal properties leading to the release of lipopolysaccharides from the bacterial outer membrane. Can also prevent bacterial biofilm development in P.aeruginosa infection. Has weak antifungal activity against C.albicans. Has anabolic, differentiating and anti-apoptotic effects on osteoblasts and can also inhibit osteoclastogenesis, possibly playing a role in the regulation of bone growth. Promotes binding of species C adenoviruses to epithelial cells, promoting adenovirus infection. Can inhibit papillomavirus infections. Stimulates the TLR4 signaling pathway leading to NF-kappa-B activation and subsequent pro-inflammatory cytokine production while also interfering with the lipopolysaccharide (LPS)-stimulated TLR4 signaling. Inhibits neutrophil granulocyte migration to sites of apoptosis, when secreted by apoptotic cells. Stimulates VEGFA-mediated endothelial cell migration and proliferation. Binds heparin, chondroitin sulfate and possibly other glycosaminoglycans (GAGs). Also binds specifically to pneumococcal surface protein A (PspA), the lipid A portion of bacterial lipopolysaccharide (LPS), lysozyme and DNA. In terms of biological role, lactoferricin binds to the bacterial surface and is crucial for the bactericidal functions. Has some antiviral activity against papillomavirus infection. N-terminal region shows strong antifungal activity against C.albicans. Contains two BBXB heparin-binding consensus sequences that appear to form the predominate functional GAG-binding site. Its function is as follows. The lactotransferrin transferrin-like domain 1 functions as a serine protease of the peptidase S60 family that cuts arginine rich regions. This function contributes to the antimicrobial activity. Shows a preferential cleavage at -Arg-Ser-Arg-Arg-|- and -Arg-Arg-Ser-Arg-|-, and of Z-Phe-Arg-|-aminomethylcoumarin sites. The protein is Lactotransferrin (LTF) of Capra hircus (Goat).